The primary structure comprises 150 residues: Depactin (150 aa).

Positions 3-148 (SGTALDENVK…SEEAIGDKIK (146 aa)) constitute an ADF-H domain.

The protein belongs to the actin-binding proteins ADF family.

Functionally, depactin interacts with actin at some of its 12 N-terminal residues and 20 C-terminal residues. Binds to actin monomers from filaments and in solution. This Asterias amurensis (Northern Pacific seastar) protein is Depactin.